We begin with the raw amino-acid sequence, 137 residues long: Holo-[acyl-carrier-protein] synthase (137 aa).

Mg(2+) is bound by residues D7 and E58.

This sequence belongs to the P-Pant transferase superfamily. AcpS family. Requires Mg(2+) as cofactor.

It localises to the cytoplasm. The catalysed reaction is apo-[ACP] + CoA = holo-[ACP] + adenosine 3',5'-bisphosphate + H(+). In terms of biological role, transfers the 4'-phosphopantetheine moiety from coenzyme A to a Ser of acyl-carrier-protein. The sequence is that of Holo-[acyl-carrier-protein] synthase from Chloroflexus aurantiacus (strain ATCC 29366 / DSM 635 / J-10-fl).